We begin with the raw amino-acid sequence, 512 residues long: Annexin A7 (512 aa).

Positions 14–38 are enriched in low complexity; the sequence is GYPGGDPSYPPAAQQAFPGGQFPPA. 2 disordered regions span residues 14 to 62 and 146 to 190; these read GYPG…GYPH and GGFS…AQPT. A compositionally biased stretch (gly residues) spans 39–52; sequence AGGGAFPPASGGGN. Positions 164-182 are enriched in low complexity; the sequence is MPGQMPGQMPGQAPSGYPS. Annexin repeat units lie at residues 209-279, 280-351, 364-436, and 440-511; these read FDAL…ALFM, PSTY…SIMA, QQAE…AVLQ, and NRPL…AISG.

The protein belongs to the annexin family.

Its function is as follows. Calcium/phospholipid-binding protein which promotes membrane fusion and is involved in exocytosis. The protein is Annexin A7 (anxa7) of Xenopus laevis (African clawed frog).